A 394-amino-acid polypeptide reads, in one-letter code: Protein BUR2 (394 aa).

2 disordered regions span residues M1–Q32 and M372–F394. Polar residues predominate over residues I9–Q32. The span at M372–S381 shows a compositional bias: basic and acidic residues.

As to quaternary structure, belongs to the BUR kinase complex.

The protein resides in the nucleus. Its function is as follows. Component of the BUR kinase complex involved in transcription regulation. This complex phosphorylates the UBC2/RAD6 ubiquitin-conjugating enzyme (E2), leading to monoubiquitination of histone H2B and the silencing of telomeric-associated genes. Also required for histone H3 methylation. Necessary for the recovery from pheromone-induced growth arrest in the cell cycle G1 phase. The kinase activity of the complex requires the presence of BUR2. Overexpression of BUR2 interferes with mitotic chromosome segregation. This Kluyveromyces lactis (strain ATCC 8585 / CBS 2359 / DSM 70799 / NBRC 1267 / NRRL Y-1140 / WM37) (Yeast) protein is Protein BUR2 (BUR2).